Reading from the N-terminus, the 513-residue chain is Teichoic acid ribitol-phosphate polymerase TarK (513 aa).

Belongs to the CDP-glycerol glycerophosphotransferase family.

It localises to the cell membrane. It catalyses the reaction 4-O-[di(2R)-glycerylphospho]-N-acetyl-beta-D-mannosaminyl-(1-&gt;4)-N-acetyl-alpha-D-glucosaminyl di-trans,octa-cis-undecaprenyl diphosphate + n CDP-L-ribitol = 4-O-[(D-ribitylphospho)(n)-di{(2R)-glycerylphospho}]-N-acetyl-beta-D-mannosaminyl-(1-&gt;4)-N-acetyl-alpha-D-glucosaminyl di-trans,octa-cis-undecaprenyl diphosphate + n CMP + n H(+). It participates in cell wall biogenesis; poly(ribitol phosphate) teichoic acid biosynthesis. Functionally, can catalyze the polymerization of the main chain of the major teichoic acid by sequential transfer of ribitol phosphate units from CDP-ribitol to the second glycerol phosphate attached to the disaccharide linkage unit. This chain is Teichoic acid ribitol-phosphate polymerase TarK (tarK), found in Staphylococcus aureus (strain NCTC 8325 / PS 47).